Consider the following 120-residue polypeptide: Large ribosomal subunit protein eL18 (120 aa).

Belongs to the eukaryotic ribosomal protein eL18 family. In terms of assembly, part of the 50S ribosomal subunit.

This Pyrococcus furiosus (strain ATCC 43587 / DSM 3638 / JCM 8422 / Vc1) protein is Large ribosomal subunit protein eL18.